We begin with the raw amino-acid sequence, 593 residues long: Methionine--tRNA ligase, mitochondrial (593 aa).

The N-terminal 29 residues, 1–29 (MLRVSAFRLLGRRGASRVSLLEDFSFRYY), are a transit peptide targeting the mitochondrion. Positions 52 to 62 (FYVNAAPHIGH) match the 'HIGH' region motif. The short motif at 347–351 (KMSKS) is the 'KMSKS' region element. K350 is a binding site for ATP.

It belongs to the class-I aminoacyl-tRNA synthetase family.

The protein resides in the mitochondrion matrix. The enzyme catalyses tRNA(Met) + L-methionine + ATP = L-methionyl-tRNA(Met) + AMP + diphosphate. The protein is Methionine--tRNA ligase, mitochondrial (MARS2) of Bos taurus (Bovine).